The chain runs to 121 residues: Large ribosomal subunit protein uL14c (121 aa).

The protein belongs to the universal ribosomal protein uL14 family. Part of the 50S ribosomal subunit.

Its subcellular location is the plastid. It localises to the organellar chromatophore. Its function is as follows. Binds to 23S rRNA. This Paulinella chromatophora protein is Large ribosomal subunit protein uL14c.